A 608-amino-acid polypeptide reads, in one-letter code: Tyrosyl-DNA phosphodiesterase 1 (608 aa).

The interval 1-101 is disordered; the sequence is MSQEGDYGRW…SDDELQPEMP (101 aa). Phosphoserine is present on Ser-61. The residue at position 147 (Thr-147) is a Phosphothreonine. The residue at position 148 (Ser-148) is a Phosphoserine. The active-site Nucleophile is the His-263. Substrate is bound at residue Lys-265. The interval 400–403 is interaction with DNA; sequence SVGS. Catalysis depends on His-493, which acts as the Proton donor/acceptor. Lys-495 is a substrate binding site.

The protein belongs to the tyrosyl-DNA phosphodiesterase family. Monomer. Phosphorylated on serine and/or threonine residues, but not on tyrosine residues. Ubiquitously expressed. Similar expression throughout the central nervous system (whole brain, amygdala, caudate nucleus, cerebellum, cerebral cortex, frontal lobe, hippocampus, medulla oblongata, occipital lobe, putamen, substantia nigra, temporal lobe, thalamus, nucleus accumbens and spinal cord) and increased expression in testis and thymus.

The protein localises to the nucleus. It is found in the cytoplasm. Its function is as follows. DNA repair enzyme that can remove a variety of covalent adducts from DNA through hydrolysis of a 3'-phosphodiester bond, giving rise to DNA with a free 3' phosphate. Catalyzes the hydrolysis of dead-end complexes between DNA and the topoisomerase I active site tyrosine residue. Hydrolyzes 3'-phosphoglycolates on protruding 3' ends on DNA double-strand breaks due to DNA damage by radiation and free radicals. Acts on blunt-ended double-strand DNA breaks and on single-stranded DNA. Has low 3'exonuclease activity and can remove a single nucleoside from the 3'end of DNA and RNA molecules with 3'hydroxyl groups. Has no exonuclease activity towards DNA or RNA with a 3'phosphate. The sequence is that of Tyrosyl-DNA phosphodiesterase 1 (TDP1) from Homo sapiens (Human).